The chain runs to 265 residues: Serine protease ami (265 aa).

The N-terminal stretch at 1 to 21 is a signal peptide; the sequence is MNVSWALLAVVLVLTVATYEC. N2 carries N-linked (GlcNAc...) asparagine glycosylation. Residues 22-26 constitute a propeptide, activation peptide; the sequence is RPRGR. In terms of domain architecture, Peptidase S1 spans 27-254; that stretch reads ILGGQDSKAE…YKSWIMESMY (228 aa). An intrachain disulfide couples C52 to C68. H67 functions as the Charge relay system in the catalytic mechanism. N-linked (GlcNAc...) asparagine glycans are attached at residues N71, N74, and N108. Catalysis depends on D115, which acts as the Charge relay system. 3 disulfide bridges follow: C149–C215, C180–C196, and C205–C230. The active-site Charge relay system is S209. N-linked (GlcNAc...) asparagine glycosylation is present at N255.

The protein belongs to the peptidase S1 family.

The protein resides in the secreted. Its function is as follows. Probable serine protease. This Xenopus tropicalis (Western clawed frog) protein is Serine protease ami.